We begin with the raw amino-acid sequence, 155 residues long: 3-hydroxyacyl-[acyl-carrier-protein] dehydratase FabZ (155 aa).

His-59 is a catalytic residue.

The protein belongs to the thioester dehydratase family. FabZ subfamily.

The protein localises to the cytoplasm. It catalyses the reaction a (3R)-hydroxyacyl-[ACP] = a (2E)-enoyl-[ACP] + H2O. Involved in unsaturated fatty acids biosynthesis. Catalyzes the dehydration of short chain beta-hydroxyacyl-ACPs and long chain saturated and unsaturated beta-hydroxyacyl-ACPs. This is 3-hydroxyacyl-[acyl-carrier-protein] dehydratase FabZ from Bartonella henselae (strain ATCC 49882 / DSM 28221 / CCUG 30454 / Houston 1) (Rochalimaea henselae).